The primary structure comprises 316 residues: Pantothenate kinase (316 aa).

Gly99–Ser106 contributes to the ATP binding site.

This sequence belongs to the prokaryotic pantothenate kinase family.

It is found in the cytoplasm. The catalysed reaction is (R)-pantothenate + ATP = (R)-4'-phosphopantothenate + ADP + H(+). It participates in cofactor biosynthesis; coenzyme A biosynthesis; CoA from (R)-pantothenate: step 1/5. This chain is Pantothenate kinase (coaA), found in Pasteurella multocida (strain Pm70).